The primary structure comprises 270 residues: 4-hydroxy-tetrahydrodipicolinate reductase (270 aa).

Residues 11–16 (GAGGRM) and glutamate 37 each bind NAD(+). Arginine 38 serves as a coordination point for NADP(+). NAD(+)-binding positions include 101–103 (GTT) and 125–128 (APNM). The Proton donor/acceptor role is filled by histidine 158. Position 159 (histidine 159) interacts with (S)-2,3,4,5-tetrahydrodipicolinate. Residue lysine 162 is the Proton donor of the active site. Position 168-169 (168-169 (GT)) interacts with (S)-2,3,4,5-tetrahydrodipicolinate.

This sequence belongs to the DapB family.

The protein localises to the cytoplasm. The catalysed reaction is (S)-2,3,4,5-tetrahydrodipicolinate + NAD(+) + H2O = (2S,4S)-4-hydroxy-2,3,4,5-tetrahydrodipicolinate + NADH + H(+). It catalyses the reaction (S)-2,3,4,5-tetrahydrodipicolinate + NADP(+) + H2O = (2S,4S)-4-hydroxy-2,3,4,5-tetrahydrodipicolinate + NADPH + H(+). Its pathway is amino-acid biosynthesis; L-lysine biosynthesis via DAP pathway; (S)-tetrahydrodipicolinate from L-aspartate: step 4/4. In terms of biological role, catalyzes the conversion of 4-hydroxy-tetrahydrodipicolinate (HTPA) to tetrahydrodipicolinate. The chain is 4-hydroxy-tetrahydrodipicolinate reductase from Shewanella oneidensis (strain ATCC 700550 / JCM 31522 / CIP 106686 / LMG 19005 / NCIMB 14063 / MR-1).